Here is a 347-residue protein sequence, read N- to C-terminus: Phosphate acyltransferase (347 aa).

The protein belongs to the PlsX family. As to quaternary structure, homodimer. Probably interacts with PlsY.

The protein localises to the cytoplasm. It carries out the reaction a fatty acyl-[ACP] + phosphate = an acyl phosphate + holo-[ACP]. It functions in the pathway lipid metabolism; phospholipid metabolism. In terms of biological role, catalyzes the reversible formation of acyl-phosphate (acyl-PO(4)) from acyl-[acyl-carrier-protein] (acyl-ACP). This enzyme utilizes acyl-ACP as fatty acyl donor, but not acyl-CoA. This is Phosphate acyltransferase from Anaplasma marginale (strain St. Maries).